A 305-amino-acid chain; its full sequence is Probable 2-methylisocitrate lyase 1 (305 aa).

52–54 is a substrate binding site; that stretch reads SGA. Mg(2+) is bound by residues aspartate 91 and aspartate 93. Substrate contacts are provided by residues 128–129, arginine 163, glutamate 193, 216–218, arginine 247, and arginine 276; these read CG and NMT.

The protein belongs to the isocitrate lyase/PEP mutase superfamily. Methylisocitrate lyase family. In terms of assembly, homotetramer; dimer of dimers. Mg(2+) is required as a cofactor.

The catalysed reaction is (2S,3R)-3-hydroxybutane-1,2,3-tricarboxylate = pyruvate + succinate. Its function is as follows. Catalyzes the thermodynamically favored C-C bond cleavage of (2R,3S)-2-methylisocitrate to yield pyruvate and succinate via an alpha-carboxy-carbanion intermediate. The chain is Probable 2-methylisocitrate lyase 1 from Corynebacterium glutamicum (strain ATCC 13032 / DSM 20300 / JCM 1318 / BCRC 11384 / CCUG 27702 / LMG 3730 / NBRC 12168 / NCIMB 10025 / NRRL B-2784 / 534).